Reading from the N-terminus, the 623-residue chain is 1-butanol dehydrogenase (quinone) (623 aa).

The first 28 residues, 1 to 28 (MKKSHAKPFALRAIVVATAAALSLPAAA), serve as a signal peptide directing secretion. Residues D40, T43, and D46 each coordinate Ca(2+). E90 lines the pyrroloquinoline quinone pocket. An intrachain disulfide couples C134 to C135. Residues R140, T184, and 202 to 204 (HGS) contribute to the pyrroloquinoline quinone site. E208 lines the Ca(2+) pocket. The tract at residues 235-274 (HMGRLNGKDSTPTGDPKAPSWPDDPNSPTGKVEAWSQGGG) is disordered. 2 residues coordinate Ca(2+): N295 and D345. D345 acts as the Proton acceptor in catalysis. A pyrroloquinoline quinone-binding site is contributed by R374. The disordered stretch occupies residues 420-440 (GKPIEKDNRPPQPKEGADKGE). Residue A592 coordinates pyrroloquinoline quinone.

The protein belongs to the bacterial PQQ dehydrogenase family. Pyrroloquinoline quinone is required as a cofactor. Requires Ca(2+) as cofactor.

The protein resides in the periplasm. It carries out the reaction butan-1-ol + a quinone = butanal + a quinol. Functionally, involved in the metabolism of butane. May function primarily in energy generation. Catalyzes the oxidation of 1-butanol to 1-butanal. Also able to use 2-butanol and butyraldehyde, although the affinity is comparatively low. The polypeptide is 1-butanol dehydrogenase (quinone) (Thauera butanivorans (strain ATCC 43655 / DSM 2080 / JCM 20651 / CCUG 51053 / NBRC 103042 / IAM 12574 / Bu B1211) (Pseudomonas butanovora)).